Here is a 469-residue protein sequence, read N- to C-terminus: MPQFLSEDFLLDTEFARRLYHEYAVDQPIFDYHCHLPPEQIAENYRFKNLYDIWLKGDHYKWRAMRTNGVPERLCTGDASDWEKFEAWAATVPHTIGNPLYHWTHLELRRPFGVTGTLLSPSTAKGIWDRCNAMLERDDFTARGIMQQMNVKMVGTTDDPIDDLRHHKAVAQDSSFSIKVLPSWRPDKAFNIELATFNDYMAKLGEVSDTDIRRFSDLQTALTKRLDHFAAHGCKVSDHALDVVMFAEADDATLDKILARRLAGETLSEHEVAQFKTGVLVWLGAEYARRGWVQQYHIGALRNNNLRQFKLLGPDVGFDSINDRPLAQELSRLLSKQNEENLLPKTILYCLNPRDNEVLGTMIGNFQGEGMPGKMQFGSGWWFNDQKDGMQRQMTQLAQLGLLSRFVGMLTDSRSFLSYTRHEYFRRILCQMIGRWVEDGEAPADLPLLGEMVKNISFDNAKNYFAIEL.

It belongs to the metallo-dependent hydrolases superfamily. Uronate isomerase family.

It carries out the reaction D-glucuronate = D-fructuronate. The enzyme catalyses aldehydo-D-galacturonate = keto-D-tagaturonate. It participates in carbohydrate metabolism; pentose and glucuronate interconversion. This is Uronate isomerase from Pectobacterium atrosepticum (strain SCRI 1043 / ATCC BAA-672) (Erwinia carotovora subsp. atroseptica).